The following is a 211-amino-acid chain: Transcriptional regulatory protein LiaR (211 aa).

Positions R3 to S119 constitute a Response regulatory domain. At D54 the chain carries 4-aspartylphosphate. The region spanning N143–H208 is the HTH luxR-type domain. The H-T-H motif DNA-binding region spans N167 to T186.

Post-translationally, phosphorylated by LiaS.

The protein resides in the cytoplasm. Functionally, member of the two-component regulatory system LiaS/LiaR probably involved in response to a subset of cell wall-active antibiotics that interfere with the lipid II cycle in the cytoplasmic membrane (bacitracin, nisin, ramoplanin and vancomycin). Also seems to be involved in response to cationic antimicrobial peptides and secretion stress. LiaR regulates the transcription of the liaIHGFSR operon. The polypeptide is Transcriptional regulatory protein LiaR (liaR) (Bacillus subtilis (strain 168)).